Consider the following 196-residue polypeptide: NAD(P)H-quinone oxidoreductase subunit I (196 aa).

4Fe-4S ferredoxin-type domains lie at 55–84 (GRIH…VDWE) and 95–124 (KHYS…MTEE). Positions 64, 67, 70, 74, 104, 107, 110, and 114 each coordinate [4Fe-4S] cluster. Positions 170 to 196 (SPHDLPEGSQRSGKRPEEIIEEAEASS) are disordered.

This sequence belongs to the complex I 23 kDa subunit family. As to quaternary structure, NDH-1 is composed of at least 11 different subunits. Requires [4Fe-4S] cluster as cofactor.

The protein localises to the cellular thylakoid membrane. It carries out the reaction a plastoquinone + NADH + (n+1) H(+)(in) = a plastoquinol + NAD(+) + n H(+)(out). The catalysed reaction is a plastoquinone + NADPH + (n+1) H(+)(in) = a plastoquinol + NADP(+) + n H(+)(out). Functionally, NDH-1 shuttles electrons from an unknown electron donor, via FMN and iron-sulfur (Fe-S) centers, to quinones in the respiratory and/or the photosynthetic chain. The immediate electron acceptor for the enzyme in this species is believed to be plastoquinone. Couples the redox reaction to proton translocation, and thus conserves the redox energy in a proton gradient. This chain is NAD(P)H-quinone oxidoreductase subunit I, found in Crocosphaera subtropica (strain ATCC 51142 / BH68) (Cyanothece sp. (strain ATCC 51142)).